The chain runs to 226 residues: 2-C-methyl-D-erythritol 4-phosphate cytidylyltransferase (226 aa).

It belongs to the IspD/TarI cytidylyltransferase family. IspD subfamily.

The enzyme catalyses 2-C-methyl-D-erythritol 4-phosphate + CTP + H(+) = 4-CDP-2-C-methyl-D-erythritol + diphosphate. It functions in the pathway isoprenoid biosynthesis; isopentenyl diphosphate biosynthesis via DXP pathway; isopentenyl diphosphate from 1-deoxy-D-xylulose 5-phosphate: step 2/6. Its function is as follows. Catalyzes the formation of 4-diphosphocytidyl-2-C-methyl-D-erythritol from CTP and 2-C-methyl-D-erythritol 4-phosphate (MEP). In Trichodesmium erythraeum (strain IMS101), this protein is 2-C-methyl-D-erythritol 4-phosphate cytidylyltransferase.